Reading from the N-terminus, the 317-residue chain is Movement protein (317 aa).

Residues 223 to 317 (ETGSIRGIAP…RVTDPNPERL (95 aa)) are disordered. Residues 255–276 (SKTTKLPSLEPSSGSSSGLSMS) are compositionally biased toward low complexity. The span at 302-317 (HLSDKGRVTDPNPERL) shows a compositional bias: basic and acidic residues.

As to quaternary structure, interacts with host glyceraldehyde 3-phosphate dehydrogenase-A/NbGAPDH-A; this interaction plays a positive role in cell-to-cell movement of the virus.

It localises to the host cell wall. Its subcellular location is the host endoplasmic reticulum membrane. In terms of biological role, plays an essential role in cell-to-cell movement and long-distance transport of the viral genome. Mechanistically, movement protein is recruited by viral replicase complexes formed on RNA1 to punctate structures on the host cortical endoplasmic reticulum. In turn, interacts with the viral genome and mediates virion movement from cell to cell. Also acts as a suppressor of RNA-mediated gene silencing, also known as post-transcriptional gene silencing (PTGS), a mechanism of plant viral defense that limits the accumulation of viral RNAs. The polypeptide is Movement protein (Red clover necrotic mosaic virus (RCNMV)).